The primary structure comprises 550 residues: Chaperonin GroEL (550 aa).

Residues 30–33 (TLGP), Lys-51, 87–91 (DGTTT), Gly-415, and Asp-496 contribute to the ATP site.

It belongs to the chaperonin (HSP60) family. As to quaternary structure, forms a cylinder of 14 subunits composed of two heptameric rings stacked back-to-back. Interacts with the co-chaperonin GroES.

Its subcellular location is the cytoplasm. The catalysed reaction is ATP + H2O + a folded polypeptide = ADP + phosphate + an unfolded polypeptide.. In terms of biological role, together with its co-chaperonin GroES, plays an essential role in assisting protein folding. The GroEL-GroES system forms a nano-cage that allows encapsulation of the non-native substrate proteins and provides a physical environment optimized to promote and accelerate protein folding. The protein is Chaperonin GroEL of Rickettsia typhi (strain ATCC VR-144 / Wilmington).